The primary structure comprises 164 residues: Ribosome maturation factor RimM (164 aa).

Residues 93–164 form the PRC barrel domain; it reads DSEYYVANLN…FVVIVPPEFI (72 aa).

It belongs to the RimM family. As to quaternary structure, binds ribosomal protein uS19.

It is found in the cytoplasm. In terms of biological role, an accessory protein needed during the final step in the assembly of 30S ribosomal subunit, possibly for assembly of the head region. Essential for efficient processing of 16S rRNA. May be needed both before and after RbfA during the maturation of 16S rRNA. It has affinity for free ribosomal 30S subunits but not for 70S ribosomes. The protein is Ribosome maturation factor RimM of Orientia tsutsugamushi (strain Boryong) (Rickettsia tsutsugamushi).